We begin with the raw amino-acid sequence, 1035 residues long: MGSKRSVPSRHRSLTTYEVMFAVLFVILVALCAGLIAVSWLSIQGSVKDAAFGKSHEARGTLKIISGATYNPHLQDKLSVDFKVLAFDIQQMIDDIFQSSNLKNEYKNSRVLQFENGSIIVIFDLLFDQWVSDKNVKEELIQGIEANKSSQLVTFHIDLNSIDITASLENFSTISPATTSEKLTTSIPLATPGNVSIECPPDSRLCADALKCIAIDLFCDGELNCPDGSDEDNKTCATACDGRFLLTGSSGSFEALHYPKPSNNTSAVCRWIIRVNQGLSIQLNFDYFNTYYADVLNIYEGMGSSKILRASLWSNNPGIIRIFSNQVTATFLIQSDESDYIGFKVTYTAFNSKELNNYEKINCNFEDGFCFWIQDLNDDNEWERTQGSTFPPSTGPTFDHTFGNESGFYISTPTGPGGRRERVGLLTLPLDPTPEQACLSFWYYMYGENVYKLSINISSDQNMEKTIFQKEGNYGQNWNYGQVTLNETVEFKVSFYGFKNQILSDIALDDISLTYGICNVSVYPEPTLVPTPPPELPTDCGGPHDLWEPNTTFTSINFPNSYPNQAFCIWNLNAQKGKNIQLHFQEFDLENIADVVEIRDGEGDDSLFLAVYTGPGPVNDVFSTTNRMTVLFITDNMLAKQGFKANFTTGYGLGIPEPCKEDNFQCKDGECIPLVNLCDGFPHCKDGSDEAHCVRLFNGTTDSSGLVQFRIQSIWHVACAENWTTQISDDVCQLLGLGTGNSSVPTFSTGGGPYVNLNTAPNGSLILTPSQQCLEDSLILLQCNYKSCGKKLVTQEVSPKIVGGSDSREGAWPWVVALYFDDQQVCGASLVSRDWLVSAAHCVYGRNMEPSKWKAVLGLHMASNLTSPQIETRLIDQIVINPHYNKRRKNNDIAMMHLEMKVNYTDYIQPICLPEENQVFPPGRICSIAGWGALIYQGSTADVLQEADVPLLSNEKCQQQMPEYNITENMVCAGYEAGGVDSCQGDSGGPLMCQENNRWLLAGVTSFGYQCALPNRPGVYARVPRFTEWIQSFLH.

The N-myristoyl glycine moiety is linked to residue glycine 2. Residues 2–18 (GSKRSVPSRHRSLTTYE) are Cytoplasmic-facing. A helical; Signal-anchor for type II membrane protein transmembrane segment spans residues 19-47 (VMFAVLFVILVALCAGLIAVSWLSIQGSV). Residues 48–1035 (KDAAFGKSHE…FTEWIQSFLH (988 aa)) lie on the Extracellular side of the membrane. One can recognise an SEA domain in the interval 54–169 (KSHEARGTLK…NSIDITASLE (116 aa)). Residues asparagine 116, asparagine 147, asparagine 170, and asparagine 194 are each glycosylated (N-linked (GlcNAc...) asparagine). In terms of domain architecture, LDL-receptor class A 1 spans 197–238 (IECPPDSRLCADALKCIAIDLFCDGELNCPDGSDEDNKTCAT). 4 cysteine pairs are disulfide-bonded: cysteine 199–cysteine 212, cysteine 206–cysteine 225, cysteine 219–cysteine 236, and cysteine 240–cysteine 269. N-linked (GlcNAc...) asparagine glycans are attached at residues asparagine 233, asparagine 263, asparagine 264, asparagine 404, asparagine 456, asparagine 486, asparagine 519, asparagine 550, and asparagine 646. The CUB 1 domain occupies 240–350 (CDGRFLLTGS…IGFKVTYTAF (111 aa)). An MAM domain is found at 358–520 (YEKINCNFED…ISLTYGICNV (163 aa)). A disulfide bridge links cysteine 540 with cysteine 568. Residues 540 to 650 (CGGPHDLWEP…QGFKANFTTG (111 aa)) form the CUB 2 domain. The LDL-receptor class A 2 domain occupies 657–695 (EPCKEDNFQCKDGECIPLVNLCDGFPHCKDGSDEAHCVR). Disulfide bonds link cysteine 659/cysteine 671, cysteine 666/cysteine 684, and cysteine 678/cysteine 693. Positions 694–787 (VRLFNGTTDS…LILLQCNYKS (94 aa)) constitute an SRCR domain. 4 N-linked (GlcNAc...) asparagine glycosylation sites follow: asparagine 698, asparagine 722, asparagine 741, and asparagine 762. 6 disulfide bridges follow: cysteine 773-cysteine 783, cysteine 788-cysteine 912, cysteine 826-cysteine 842, cysteine 926-cysteine 993, cysteine 957-cysteine 972, and cysteine 983-cysteine 1011. In terms of domain architecture, Peptidase S1 spans 801–1035 (IVGGSDSREG…FTEWIQSFLH (235 aa)). Residue histidine 841 is the Charge relay system of the active site. Asparagine 864 carries N-linked (GlcNAc...) asparagine glycosylation. Aspartate 892 serves as the catalytic Charge relay system. N-linked (GlcNAc...) asparagine glycans are attached at residues asparagine 903 and asparagine 965. The active-site Charge relay system is serine 987.

This sequence belongs to the peptidase S1 family. In terms of assembly, heterodimer of a catalytic (light) chain and a multidomain (heavy) chain linked by a disulfide bond. The chains are derived from a single precursor that is cleaved by a trypsin-like protease. In terms of tissue distribution, intestinal brush border.

The protein localises to the membrane. The enzyme catalyses Activation of trypsinogen by selective cleavage of 6-Lys-|-Ile-7 bond.. Responsible for initiating activation of pancreatic proteolytic proenzymes (trypsin, chymotrypsin and carboxypeptidase A). It catalyzes the conversion of trypsinogen to trypsin which in turn activates other proenzymes including chymotrypsinogen, procarboxypeptidases, and proelastases. This is Enteropeptidase (TMPRSS15) from Bos taurus (Bovine).